A 378-amino-acid polypeptide reads, in one-letter code: Beta sliding clamp (378 aa).

Belongs to the beta sliding clamp family. As to quaternary structure, forms a ring-shaped head-to-tail homodimer around DNA which binds and tethers DNA polymerases and other proteins to the DNA. The DNA replisome complex has a single clamp-loading complex (3 tau and 1 each of delta, delta', psi and chi subunits) which binds 3 Pol III cores (1 core on the leading strand and 2 on the lagging strand) each with a beta sliding clamp dimer. Additional proteins in the replisome are other copies of gamma, psi and chi, Ssb, DNA helicase and RNA primase.

The protein resides in the cytoplasm. In terms of biological role, confers DNA tethering and processivity to DNA polymerases and other proteins. Acts as a clamp, forming a ring around DNA (a reaction catalyzed by the clamp-loading complex) which diffuses in an ATP-independent manner freely and bidirectionally along dsDNA. Initially characterized for its ability to contact the catalytic subunit of DNA polymerase III (Pol III), a complex, multichain enzyme responsible for most of the replicative synthesis in bacteria; Pol III exhibits 3'-5' exonuclease proofreading activity. The beta chain is required for initiation of replication as well as for processivity of DNA replication. This Streptococcus pneumoniae serotype 4 (strain ATCC BAA-334 / TIGR4) protein is Beta sliding clamp (dnaN).